Here is a 249-residue protein sequence, read N- to C-terminus: Metal-staphylopine import system ATP-binding protein CntF (249 aa).

Residues 2 to 244 (IKVTDVEKSY…DNAYTRELIE (243 aa)) form the ABC transporter domain. ATP is bound at residue 42–49 (GESGSGKS).

The protein belongs to the ABC transporter superfamily. In terms of assembly, the complex is composed of two ATP-binding proteins (CntD and CntF), two transmembrane proteins (CntB and CntC) and a solute-binding protein (CntA).

The protein localises to the cell membrane. In terms of biological role, part of the ABC transporter complex CntABCDF (Opp1) involved in the uptake of metal in complex with the metallophore staphylopine (StP). May be involved in the import of a large array of divalent metals ions such as nickel, cobalt, zinc, copper and iron. Probably responsible for energy coupling to the transport system. The chain is Metal-staphylopine import system ATP-binding protein CntF from Staphylococcus aureus (strain Mu50 / ATCC 700699).